The sequence spans 478 residues: Pathogenicity cluster 5 protein d (478 aa).

A signal peptide spans 1–19; sequence MQIQNLIAALAGMAVVAEA. Disordered stretches follow at residues 35–89 and 299–400; these read RQNK…GQAN and NGGK…GGKG. The segment covering 38–64 has biased composition (low complexity); the sequence is KGGNNNNNNNNNNNNNNNNNKNNGGNN. Over residues 65–89 the composition is skewed to polar residues; it reads QLCLNPNNVQKGSQQAGTPKQGQAN. Over residues 316-326 the composition is skewed to gly residues; the sequence is NNDGGGGGNDG. Composition is skewed to low complexity over residues 327–348 and 379–393; these read GNNS…QNGA and TQAG…TNGN. Residues Asn-328 and Asn-332 are each glycosylated (N-linked (GlcNAc...) asparagine).

The protein localises to the secreted. Functionally, secreted protein required for appressorial penetration of intact host epidermal cells and for pathogenicit, but not for subsequent biotrophic and necrotrophic colonization of leaves. In Colletotrichum graminicola (strain M1.001 / M2 / FGSC 10212) (Maize anthracnose fungus), this protein is Pathogenicity cluster 5 protein d.